The primary structure comprises 30 residues: GIPCAESCVYIPCTVTALLGCSCSNRVCYN.

Positions 1–30 (GIPCAESCVYIPCTVTALLGCSCSNRVCYN) form a cross-link, cyclopeptide (Gly-Asn). Disulfide bonds link Cys4-Cys21, Cys8-Cys23, and Cys13-Cys28.

This is a cyclic peptide. Expressed in leaves, petals, petioles and roots but not in runners (at protein level).

In terms of biological role, probably participates in a plant defense mechanism. The protein is Cycloviolacin-O1 of Viola odorata (Sweet violet).